The chain runs to 1121 residues: CRISPR-associated endonuclease Cas9 1 (1121 aa).

Asp9 (for RuvC-like nuclease domain) is an active-site residue. Asp9, Glu509, and Glu513 together coordinate Mg(2+). One can recognise an HNH Cas9-type domain in the interval 516-684; it reads EDDEKKAIQK…VRKKFIERNL (169 aa). The active-site Proton acceptor for HNH nuclease domain is the His599. His738 is a binding site for Mg(2+).

This sequence belongs to the CRISPR-associated protein Cas9 family. Subtype II-A subfamily. As to quaternary structure, monomer. Binds crRNA and tracrRNA. Mg(2+) serves as cofactor.

Its function is as follows. CRISPR (clustered regularly interspaced short palindromic repeat) is an adaptive immune system that provides protection against mobile genetic elements (viruses, transposable elements and conjugative plasmids). CRISPR clusters contain spacers, sequences complementary to antecedent mobile elements, and target invading nucleic acids. CRISPR clusters are transcribed and processed into CRISPR RNA (crRNA). In type II CRISPR systems correct processing of pre-crRNA requires a trans-encoded small RNA (tracrRNA), endogenous ribonuclease 3 (rnc) and this protein. The tracrRNA serves as a guide for ribonuclease 3-aided processing of pre-crRNA. Subsequently Cas9/crRNA/tracrRNA endonucleolytically cleaves linear or circular dsDNA target complementary to the spacer; Cas9 is inactive in the absence of the 2 guide RNAs (gRNA). Cas9 recognizes the protospacer adjacent motif (PAM) in the CRISPR repeat sequences to help distinguish self versus nonself, as targets within the bacterial CRISPR locus do not have PAMs. PAM recognition is also required for catalytic activity. Cuts target DNA when Cas9 and gRNAs are mixed. This chain is CRISPR-associated endonuclease Cas9 1, found in Streptococcus thermophilus (strain ATCC BAA-491 / LMD-9).